Here is a 217-residue protein sequence, read N- to C-terminus: Large ribosomal subunit protein uL4 (217 aa).

The tract at residues 58–90 (TAATKGRSDVSGGGKKPWRQKGTGRARSGTSRS) is disordered.

It belongs to the universal ribosomal protein uL4 family. As to quaternary structure, part of the 50S ribosomal subunit.

Functionally, one of the primary rRNA binding proteins, this protein initially binds near the 5'-end of the 23S rRNA. It is important during the early stages of 50S assembly. It makes multiple contacts with different domains of the 23S rRNA in the assembled 50S subunit and ribosome. Its function is as follows. Forms part of the polypeptide exit tunnel. The chain is Large ribosomal subunit protein uL4 from Syntrophus aciditrophicus (strain SB).